Reading from the N-terminus, the 230-residue chain is Large ribosomal subunit protein uL1 (230 aa).

The protein belongs to the universal ribosomal protein uL1 family. Part of the 50S ribosomal subunit.

Functionally, binds directly to 23S rRNA. The L1 stalk is quite mobile in the ribosome, and is involved in E site tRNA release. Protein L1 is also a translational repressor protein, it controls the translation of the L11 operon by binding to its mRNA. In Caldicellulosiruptor bescii (strain ATCC BAA-1888 / DSM 6725 / KCTC 15123 / Z-1320) (Anaerocellum thermophilum), this protein is Large ribosomal subunit protein uL1.